Here is a 498-residue protein sequence, read N- to C-terminus: Glycerol kinase (498 aa).

Residue Thr12 coordinates ADP. ATP contacts are provided by Thr12, Thr13, and Ser14. Thr12 lines the sn-glycerol 3-phosphate pocket. Arg16 is a binding site for ADP. Residues Arg82, Glu83, Tyr134, and Asp243 each contribute to the sn-glycerol 3-phosphate site. The glycerol site is built by Arg82, Glu83, Tyr134, Asp243, and Gln244. The ADP site is built by Thr265 and Gly308. ATP is bound by residues Thr265, Gly308, Gln312, and Gly409. Positions 409 and 413 each coordinate ADP.

This sequence belongs to the FGGY kinase family. Homotetramer and homodimer (in equilibrium).

It catalyses the reaction glycerol + ATP = sn-glycerol 3-phosphate + ADP + H(+). Its pathway is polyol metabolism; glycerol degradation via glycerol kinase pathway; sn-glycerol 3-phosphate from glycerol: step 1/1. Activated by phosphorylation and inhibited by fructose 1,6-bisphosphate (FBP). In terms of biological role, key enzyme in the regulation of glycerol uptake and metabolism. Catalyzes the phosphorylation of glycerol to yield sn-glycerol 3-phosphate. This is Glycerol kinase from Clostridium botulinum (strain Langeland / NCTC 10281 / Type F).